We begin with the raw amino-acid sequence, 466 residues long: 3-isopropylmalate dehydratase large subunit (466 aa).

Residues Cys-347, Cys-407, and Cys-410 each contribute to the [4Fe-4S] cluster site.

Belongs to the aconitase/IPM isomerase family. LeuC type 1 subfamily. In terms of assembly, heterodimer of LeuC and LeuD. Requires [4Fe-4S] cluster as cofactor.

The catalysed reaction is (2R,3S)-3-isopropylmalate = (2S)-2-isopropylmalate. It functions in the pathway amino-acid biosynthesis; L-leucine biosynthesis; L-leucine from 3-methyl-2-oxobutanoate: step 2/4. Functionally, catalyzes the isomerization between 2-isopropylmalate and 3-isopropylmalate, via the formation of 2-isopropylmaleate. This Enterobacter sp. (strain 638) protein is 3-isopropylmalate dehydratase large subunit.